The primary structure comprises 919 residues: Rho guanine nucleotide exchange factor 1 (919 aa).

The region spanning 39–230 is the RGSL domain; sequence DQNSQFQSLE…SLYMRHLGVR (192 aa). Residues 247–402 form a disordered region; the sequence is VMGNRRSDEP…PPGWRELVPS (156 aa). Residues 281 to 310 are compositionally biased toward basic and acidic residues; it reads DCRHLKVEVDEKPGPADRKGSLGISSRDRT. Positions 363–379 are enriched in acidic residues; sequence STEDNGETESPEPGDDG. Ser372 carries the post-translational modification Phosphoserine. The 190-residue stretch at 414–603 folds into the DH domain; it reads KRQEVISELL…REILHHVNQA (190 aa). Residues 645 to 758 form the PH domain; sequence KLVHEGPLTW…WCALITETAG (114 aa). Thr693 carries the phosphothreonine modification. Residue Tyr736 is modified to Phosphotyrosine; by JAK2. 2 disordered regions span residues 761–800 and 839–865; these read KVPA…PADA and TEED…PTHT. A compositionally biased stretch (low complexity) spans 775 to 787; sequence PSSTREPLLSSSE. Residues 864–893 adopt a coiled-coil conformation; the sequence is HTQEVEENLLSLEVVIKQLEELEEEFCRLR. Ser904 carries the post-translational modification Phosphoserine.

As to quaternary structure, interacts with RHOA, GNA12 and GNA13. Homooligomerizes through the coiled coil region. Interacts with CTNNAL1. May interact with CCPG1. Post-translationally, phosphorylated by PKCA. Angiotensin-2 induced Tyr-736 phosphorylation is mediated by JAK2.

The protein resides in the cytoplasm. It localises to the membrane. Functionally, seems to play a role in the regulation of RhoA GTPase by guanine nucleotide-binding alpha-12 (GNA12) and alpha-13 (GNA13) subunits. Acts as a GTPase-activating protein (GAP) for GNA12 and GNA13, and as guanine nucleotide exchange factor (GEF) for RhoA GTPase. Activated G alpha 13/GNA13 stimulates the RhoGEF activity through interaction with the RGS-like domain. This GEF activity is inhibited by binding to activated GNA12. Mediates angiotensin-2-induced RhoA activation. In lymphoid follicles, may trigger activation of GNA13 as part of S1PR2-dependent signaling pathway that leads to inhibition of germinal center (GC) B cell growth and migration outside the GC niche. This Rattus norvegicus (Rat) protein is Rho guanine nucleotide exchange factor 1 (Arhgef1).